We begin with the raw amino-acid sequence, 220 residues long: MDSLEKIKEEVISCKKCKLWQFRTNAVPGEGYPKAEIMFVGEAPGENEDKEGRPFVGAAGKLLTQMIKEILGLERDQVFITNVVKCRPPNNRDPEEDEITACSPYLDRQIDIIMPKIIVTLGRHSTKYIFSKMGENFSSITKVRGKSYVWKYKEKEIIVFPTYHPAAALYNPNLRKILEEDFKKIRELAITPKRYTIDYFLGGKNRSWDKREKSDSNSGK.

[4Fe-4S] cluster-binding residues include Cys14 and Cys17. Uracil is bound by residues Gly41–Ala43, Phe55, and Asn82. [4Fe-4S] cluster-binding residues include Cys86 and Cys102. Uracil is bound at residue His164.

This sequence belongs to the uracil-DNA glycosylase (UDG) superfamily. Type 4 (UDGa) family.

It carries out the reaction Hydrolyzes single-stranded DNA or mismatched double-stranded DNA and polynucleotides, releasing free uracil.. In terms of biological role, removes uracil bases that are present in DNA as a result of either deamination of cytosine or misincorporation of dUMP instead of dTMP. This Sulfurisphaera tokodaii (strain DSM 16993 / JCM 10545 / NBRC 100140 / 7) (Sulfolobus tokodaii) protein is Type-4 uracil-DNA glycosylase.